The following is a 466-amino-acid chain: ATP synthase subunit beta (466 aa).

Residue 156–163 coordinates ATP; sequence GGAGVGKT.

The protein belongs to the ATPase alpha/beta chains family. In terms of assembly, F-type ATPases have 2 components, CF(1) - the catalytic core - and CF(0) - the membrane proton channel. CF(1) has five subunits: alpha(3), beta(3), gamma(1), delta(1), epsilon(1). CF(0) has three main subunits: a(1), b(2) and c(9-12). The alpha and beta chains form an alternating ring which encloses part of the gamma chain. CF(1) is attached to CF(0) by a central stalk formed by the gamma and epsilon chains, while a peripheral stalk is formed by the delta and b chains.

The protein localises to the cell membrane. It catalyses the reaction ATP + H2O + 4 H(+)(in) = ADP + phosphate + 5 H(+)(out). In terms of biological role, produces ATP from ADP in the presence of a proton gradient across the membrane. The catalytic sites are hosted primarily by the beta subunits. This Polynucleobacter asymbioticus (strain DSM 18221 / CIP 109841 / QLW-P1DMWA-1) (Polynucleobacter necessarius subsp. asymbioticus) protein is ATP synthase subunit beta.